Here is a 219-residue protein sequence, read N- to C-terminus: Salivary IL-4-inducing protein (219 aa).

A signal peptide spans 1 to 19 (MKYLLTLLMALSLVNLMLT). Residues 19 to 109 (TRPTPEDDGG…KNDPRETYNK (91 aa)) form a disordered region. A compositionally biased stretch (low complexity) spans 30-43 (SEEPQTQETTGETT). A compositionally biased stretch (basic and acidic residues) spans 72 to 107 (DDTAKKEDDGESKDGEGSEKSDKEKGEPKNDPRETY).

In terms of tissue distribution, salivary gland (at protein level).

The protein localises to the secreted. In terms of biological role, induces expression of IL4 in host skin by diverting host CD4 cells away from Th1 and towards Th2 responsiveness. Induces expression of IL10 in host skin. Down-regulates expression of IL12B, IFN-gamma (IFNG) and TNF-alpha (TNF) in host skin. In Aedes aegypti (Yellowfever mosquito), this protein is Salivary IL-4-inducing protein.